A 513-amino-acid polypeptide reads, in one-letter code: Maturase K (513 aa).

Belongs to the intron maturase 2 family. MatK subfamily.

The protein resides in the plastid. Its subcellular location is the chloroplast. Usually encoded in the trnK tRNA gene intron. Probably assists in splicing its own and other chloroplast group II introns. The protein is Maturase K of Typha latifolia (Bulrush).